We begin with the raw amino-acid sequence, 586 residues long: ATP-dependent RNA helicase HAS1 (586 aa).

The disordered stretch occupies residues 1-107 (MASDLSKKRK…GDGSLLGPSV (107 aa)). The segment covering 39 to 60 (EDSDAERDNSSDPEIENQEPEV) has biased composition (acidic residues). The short motif at 112 to 140 (QAFSELNLSDKTMMSINEMGFTKMTEIQR) is the Q motif element. In terms of domain architecture, Helicase ATP-binding spans 143–318 (IPPLLAGKDV…RISLRPGPLY (176 aa)). 156 to 163 (AKTGSGKT) provides a ligand contact to ATP. The DEAD box signature appears at 265 to 268 (DEAD). In terms of domain architecture, Helicase C-terminal spans 332–502 (GLDQGYVIVD…NVQSQLEKLI (171 aa)). The segment at 557 to 586 (TLGAGMSRDKKPQARRAYGSQPRQSGHQRR) is disordered. Over residues 577-586 (QPRQSGHQRR) the composition is skewed to polar residues.

The protein belongs to the DEAD box helicase family. DDX18/HAS1 subfamily. In terms of assembly, associates in the nucleolus with the 60S and pre-60S ribosomal subunits.

The protein resides in the nucleus. Its subcellular location is the nucleolus. The enzyme catalyses ATP + H2O = ADP + phosphate + H(+). In terms of biological role, ATP-dependent RNA helicase involved in 40S ribosomal subunit biogenesis. Required for the processing and cleavage of 35S pre-rRNA at sites A0, A1, and A2, leading to mature 18S rRNA. This Chaetomium globosum (strain ATCC 6205 / CBS 148.51 / DSM 1962 / NBRC 6347 / NRRL 1970) (Soil fungus) protein is ATP-dependent RNA helicase HAS1 (HAS1).